A 192-amino-acid polypeptide reads, in one-letter code: Peptidyl-tRNA hydrolase (192 aa).

His17 contacts tRNA. The Proton acceptor role is filled by His22. Residues Phe68, Asn70, and Asn116 each coordinate tRNA.

This sequence belongs to the PTH family. As to quaternary structure, monomer.

It localises to the cytoplasm. The catalysed reaction is an N-acyl-L-alpha-aminoacyl-tRNA + H2O = an N-acyl-L-amino acid + a tRNA + H(+). In terms of biological role, hydrolyzes ribosome-free peptidyl-tRNAs (with 1 or more amino acids incorporated), which drop off the ribosome during protein synthesis, or as a result of ribosome stalling. Its function is as follows. Catalyzes the release of premature peptidyl moieties from peptidyl-tRNA molecules trapped in stalled 50S ribosomal subunits, and thus maintains levels of free tRNAs and 50S ribosomes. This chain is Peptidyl-tRNA hydrolase, found in Stenotrophomonas maltophilia (strain R551-3).